Reading from the N-terminus, the 142-residue chain is Transcription antitermination protein NusB (142 aa).

The protein belongs to the NusB family.

Involved in transcription antitermination. Required for transcription of ribosomal RNA (rRNA) genes. Binds specifically to the boxA antiterminator sequence of the ribosomal RNA (rrn) operons. This chain is Transcription antitermination protein NusB, found in Trichlorobacter lovleyi (strain ATCC BAA-1151 / DSM 17278 / SZ) (Geobacter lovleyi).